A 296-amino-acid chain; its full sequence is uncharacterized protein (296 aa).

Residues 1-95 (MYKIVSKKEL…VGPLGVPSEF (95 aa)) form the FAD-binding FR-type domain.

This is an uncharacterized protein from Clostridium beijerinckii (Clostridium MP).